The chain runs to 98 residues: NADH-ubiquinone oxidoreductase chain 4L (98 aa).

Transmembrane regions (helical) follow at residues 1 to 21 (MSMV…GLLV), 30 to 50 (LLCL…TILI), and 61 to 81 (IILL…LVMV).

Belongs to the complex I subunit 4L family. As to quaternary structure, core subunit of respiratory chain NADH dehydrogenase (Complex I) which is composed of 45 different subunits.

Its subcellular location is the mitochondrion inner membrane. The enzyme catalyses a ubiquinone + NADH + 5 H(+)(in) = a ubiquinol + NAD(+) + 4 H(+)(out). Functionally, core subunit of the mitochondrial membrane respiratory chain NADH dehydrogenase (Complex I) which catalyzes electron transfer from NADH through the respiratory chain, using ubiquinone as an electron acceptor. Part of the enzyme membrane arm which is embedded in the lipid bilayer and involved in proton translocation. The chain is NADH-ubiquinone oxidoreductase chain 4L (MT-ND4L) from Pagophilus groenlandicus (Harp seal).